The following is a 293-amino-acid chain: Probable porphobilinogen deaminase (293 aa).

At C233 the chain carries S-(dipyrrolylmethanemethyl)cysteine.

The protein belongs to the HMBS family. The cofactor is dipyrromethane.

It carries out the reaction 4 porphobilinogen + H2O = hydroxymethylbilane + 4 NH4(+). Its pathway is porphyrin-containing compound metabolism; protoporphyrin-IX biosynthesis; coproporphyrinogen-III from 5-aminolevulinate: step 2/4. Its function is as follows. Tetrapolymerization of the monopyrrole PBG into the hydroxymethylbilane pre-uroporphyrinogen in several discrete steps. This chain is Probable porphobilinogen deaminase, found in Saccharolobus islandicus (strain L.S.2.15 / Lassen #1) (Sulfolobus islandicus).